The primary structure comprises 235 residues: Geranylgeranylglyceryl phosphate synthase (235 aa).

A sn-glycerol 1-phosphate-binding site is contributed by Lys13. Asp15 and Thr42 together coordinate Mg(2+). Sn-glycerol 1-phosphate is bound by residues 162–167 (YVEYSG), Gly192, and 212–213 (GD).

It belongs to the GGGP/HepGP synthase family. Group I subfamily. Mg(2+) is required as a cofactor.

The protein localises to the cytoplasm. The catalysed reaction is sn-glycerol 1-phosphate + (2E,6E,10E)-geranylgeranyl diphosphate = sn-3-O-(geranylgeranyl)glycerol 1-phosphate + diphosphate. It functions in the pathway membrane lipid metabolism; glycerophospholipid metabolism. Its function is as follows. Prenyltransferase that catalyzes the transfer of the geranylgeranyl moiety of geranylgeranyl diphosphate (GGPP) to the C3 hydroxyl of sn-glycerol-1-phosphate (G1P). This reaction is the first ether-bond-formation step in the biosynthesis of archaeal membrane lipids. This chain is Geranylgeranylglyceryl phosphate synthase, found in Natronomonas pharaonis (strain ATCC 35678 / DSM 2160 / CIP 103997 / JCM 8858 / NBRC 14720 / NCIMB 2260 / Gabara) (Halobacterium pharaonis).